The following is a 210-amino-acid chain: Glutathione S-transferase-like protein FUS3 (210 aa).

The 74-residue stretch at 1-74 folds into the GST N-terminal domain; it reads MPNARVFKIL…YVAQSGPQAS (74 aa). A GST C-terminal domain is found at 80 to 206; the sequence is DAMSSAKIRQ…GKPNFIEKRR (127 aa).

Belongs to the GST superfamily.

In terms of biological role, glutathione S-transferase-like protein; part of the gene cluster that mediates the biosynthesis of the mycotoxin fusarin C. Within the cluster, FUS1, FUS2, FUS8 and FUS9 are sufficient for fusarin production. The other FUS cluster members are not essential for fusarin C biosynthesis. This chain is Glutathione S-transferase-like protein FUS3, found in Gibberella fujikuroi (strain CBS 195.34 / IMI 58289 / NRRL A-6831) (Bakanae and foot rot disease fungus).